Reading from the N-terminus, the 783-residue chain is Cation/H(+) antiporter 11 (783 aa).

The next 12 helical transmembrane spans lie at 31–51, 61–81, 101–120, 135–155, 175–195, 205–225, 244–264, 276–295, 300–322, 360–380, 389–409, and 418–438; these read VVFGYSLPLLEIQIILIFFCI, IGVSQIVSYMIAGLILGPQLF, AALRCISVFGRLMFTFLMTV, VVIGIVSFFAPLFSLSFLNLF, VIVITQSQILLPSTTYILLEL, LALSASAINDMLGIFAMIVAT, AVIIFFLIVFFVFKPMVQWII, IYIHAVILTAFASAAYFVFF, VLGPLIIGIIIPEGPPLGSALEA, IFLTLLILVIKLVACLTLCLY, LAVSLILSYKSFVEFVLYEAV, and ATYAFLILYSLLSAGIVPMVV.

The protein belongs to the monovalent cation:proton antiporter 2 (CPA2) transporter (TC 2.A.37) family. CHX (TC 2.A.37.4) subfamily. As to expression, specifically expressed in pollen.

It localises to the membrane. In terms of biological role, may operate as a cation/H(+) antiporter. The polypeptide is Cation/H(+) antiporter 11 (CHX11) (Arabidopsis thaliana (Mouse-ear cress)).